Consider the following 1145-residue polypeptide: Trafficking protein particle complex subunit 10 (1145 aa).

This sequence belongs to the TMEM1 family. Part of the multisubunit TRAPP (transport protein particle) complex. Interacts with Shal (via C-terminal dendritic targeting motif). As to expression, co-expressed with Shal in the nervous system.

Its subcellular location is the golgi apparatus. The protein localises to the cis-Golgi network. It localises to the cell projection. It is found in the dendrite. The protein resides in the perikaryon. Functionally, may play a role in vesicular transport from endoplasmic reticulum to Golgi. Has a role in one of the several mechanisms underlying dendritic localization of Shal channels. The protein is Trafficking protein particle complex subunit 10 (SIDL) of Drosophila melanogaster (Fruit fly).